Here is a 364-residue protein sequence, read N- to C-terminus: Trans-enoyl reductase sthE (364 aa).

51–54 (TDYK) is an NADP(+) binding site. A substrate-binding site is contributed by 137 to 144 (WGTAALAI). NADP(+)-binding positions include 172–175 (ATAT), 195–198 (SESS), tyrosine 213, and 261–262 (LE). 281–285 (GFEGQ) contributes to the substrate binding site. NADP(+) is bound at residue 351–352 (VK).

Belongs to the zinc-containing alcohol dehydrogenase family. As to quaternary structure, monomer.

It catalyses the reaction 7 malonyl-CoA + acetyl-CoA + 10 AH2 + 5 S-adenosyl-L-methionine + 2 H(+) = dehydroprobetaenone I + 10 A + 5 S-adenosyl-L-homocysteine + 7 CO2 + 8 CoA + 6 H2O. Its pathway is mycotoxin biosynthesis. In terms of biological role, trans-enoyl reductase; part of the gene cluster that mediates the biosynthesis of the phytotoxin stemphyloxin II. The first step of the pathway is the synthesis of dehydroprobetaenone I by the polyketide synthase sthA and the enoyl reductase sthE via condensation of one acetyl-CoA starter unit with 7 malonyl-CoA units and 5 methylations. The C-terminal reductase (R) domain of sthA catalyzes the reductive release of the polyketide chain. Because sthA lacks a designated enoylreductase (ER) domain, the required activity is provided the enoyl reductase sthE. The short-chain dehydrogenase/reductase sthC then catalyzes reduction of dehydroprobetaenone I to probetaenone I. The cytochrome P450 monooxygenase sthF catalyzes successive epoxidation, oxidation (resulting from epoxide opening) and hydroxylation to install a tertiary alcohol in the decaline ring to yield betaenone C from dehydroprobetaenone I and betaenone B from probetaenone I. The FAD-linked oxidoreductase sthB is responsible for the conversion of betaenone C to betaenone A via an intramolecular aldol reaction between C-1 and C-17 to form the bridged tricyclic system in betaenone A. Finally, the cytochrome P450 monooxygenase sthD catalyzes the hydroxylation of C-15 to afford the final metabolite stemphyloxin II. The protein is Trans-enoyl reductase sthE of Phaeosphaeria nodorum (strain SN15 / ATCC MYA-4574 / FGSC 10173) (Glume blotch fungus).